Here is a 78-residue protein sequence, read N- to C-terminus: Acyl carrier protein (78 aa).

Residues 2-77 (SSIEERVKKI…QATSYVEANL (76 aa)) enclose the Carrier domain. Serine 37 is modified (O-(pantetheine 4'-phosphoryl)serine).

The protein belongs to the acyl carrier protein (ACP) family. Post-translationally, 4'-phosphopantetheine is transferred from CoA to a specific serine of apo-ACP by AcpS. This modification is essential for activity because fatty acids are bound in thioester linkage to the sulfhydryl of the prosthetic group.

The protein resides in the cytoplasm. Its pathway is lipid metabolism; fatty acid biosynthesis. Functionally, carrier of the growing fatty acid chain in fatty acid biosynthesis. This chain is Acyl carrier protein, found in Hydrogenovibrio crunogenus (strain DSM 25203 / XCL-2) (Thiomicrospira crunogena).